The sequence spans 77 residues: MSHLDEVIARVDAAIEESVIAHMNELLIALSDDAELSREDRYTQQQRLRTAIAHHGRKHKEDMEARHEQLTKGGTIL.

The segment at 54–77 (HHGRKHKEDMEARHEQLTKGGTIL) is disordered. Residues 59–70 (HKEDMEARHEQL) show a composition bias toward basic and acidic residues.

This is an uncharacterized protein from Escherichia coli O157:H7.